Consider the following 46-residue polypeptide: Esculentin-1SEa (46 aa).

Cysteine 40 and cysteine 46 are disulfide-bonded.

As to expression, expressed by the skin glands.

It is found in the secreted. Mast cell degranulating peptide. Causes histamine release from rat peritoneal mast cells in vitro. Has antibacterial activity against the Gram-negative bacterium E.coli K12 and Gram-positive bacterium M.luteus NCT C2665. This chain is Esculentin-1SEa, found in Lithobates sevosus (Dusky gopher frog).